A 199-amino-acid polypeptide reads, in one-letter code: Recombination protein RecR (199 aa).

Residues Cys-57 to Cys-72 form a C4-type zinc finger. The region spanning Ser-81–Pro-176 is the Toprim domain.

The protein belongs to the RecR family.

May play a role in DNA repair. It seems to be involved in an RecBC-independent recombinational process of DNA repair. It may act with RecF and RecO. The chain is Recombination protein RecR from Shewanella putrefaciens (strain CN-32 / ATCC BAA-453).